Consider the following 522-residue polypeptide: Maturase K (522 aa).

Belongs to the intron maturase 2 family. MatK subfamily.

The protein localises to the plastid. Its subcellular location is the chloroplast. Its function is as follows. Usually encoded in the trnK tRNA gene intron. Probably assists in splicing its own and other chloroplast group II introns. The chain is Maturase K from Micranthus junceus (Micranthus plantagineus var. junceus).